Consider the following 370-residue polypeptide: Probable neutral protease 2 homolog ARB_03949 (370 aa).

Positions 1–19 (MQLVAALAALGALVAPAVA) are cleaved as a signal peptide. Residues 20-188 (YPHAPMNETL…SIHSRALQKR (169 aa)) constitute a propeptide that is removed on maturation. Disulfide bonds link Cys-196/Cys-267 and Cys-274/Cys-292. His-316 lines the Zn(2+) pocket. Glu-317 is an active-site residue. Zn(2+) contacts are provided by His-320 and Asp-331.

This sequence belongs to the peptidase M35 family. It depends on Zn(2+) as a cofactor.

Its subcellular location is the secreted. The catalysed reaction is Preferential cleavage of bonds with hydrophobic residues in P1'. Also 3-Asn-|-Gln-4 and 8-Gly-|-Ser-9 bonds in insulin B chain.. Its function is as follows. Probable secreted metalloprotease that shows high activities on basic nuclear substrates such as histone and protamine. May be involved in virulence. In Arthroderma benhamiae (strain ATCC MYA-4681 / CBS 112371) (Trichophyton mentagrophytes), this protein is Probable neutral protease 2 homolog ARB_03949.